The sequence spans 631 residues: Phosphomethylpyrimidine synthase (631 aa).

Substrate-binding positions include asparagine 239, methionine 268, tyrosine 297, histidine 333, serine 353–glycine 355, aspartate 394–arginine 397, and glutamate 433. A Zn(2+)-binding site is contributed by histidine 437. Substrate is bound at residue tyrosine 460. Histidine 501 contributes to the Zn(2+) binding site. Cysteine 581, cysteine 584, and cysteine 589 together coordinate [4Fe-4S] cluster.

This sequence belongs to the ThiC family. Homodimer. It depends on [4Fe-4S] cluster as a cofactor.

It carries out the reaction 5-amino-1-(5-phospho-beta-D-ribosyl)imidazole + S-adenosyl-L-methionine = 4-amino-2-methyl-5-(phosphooxymethyl)pyrimidine + CO + 5'-deoxyadenosine + formate + L-methionine + 3 H(+). The protein operates within cofactor biosynthesis; thiamine diphosphate biosynthesis. Functionally, catalyzes the synthesis of the hydroxymethylpyrimidine phosphate (HMP-P) moiety of thiamine from aminoimidazole ribotide (AIR) in a radical S-adenosyl-L-methionine (SAM)-dependent reaction. In Klebsiella pneumoniae (strain 342), this protein is Phosphomethylpyrimidine synthase.